Reading from the N-terminus, the 415-residue chain is uncharacterized protein (415 aa).

Disordered stretches follow at residues 329-351 (KFNK…TESS) and 388-415 (KSMM…IITL). The segment covering 338 to 348 (LQNESGDDSET) has biased composition (acidic residues). Basic residues predominate over residues 399-409 (KSNRKSNKRSN).

This is an uncharacterized protein from Acanthamoeba polyphaga mimivirus (APMV).